The sequence spans 194 residues: Peptidyl-tRNA hydrolase (194 aa).

Tyr17 contributes to the tRNA binding site. The active-site Proton acceptor is His22. Residues Tyr68, Asn70, and Asn116 each contribute to the tRNA site.

Belongs to the PTH family. Monomer.

The protein resides in the cytoplasm. It catalyses the reaction an N-acyl-L-alpha-aminoacyl-tRNA + H2O = an N-acyl-L-amino acid + a tRNA + H(+). Hydrolyzes ribosome-free peptidyl-tRNAs (with 1 or more amino acids incorporated), which drop off the ribosome during protein synthesis, or as a result of ribosome stalling. Its function is as follows. Catalyzes the release of premature peptidyl moieties from peptidyl-tRNA molecules trapped in stalled 50S ribosomal subunits, and thus maintains levels of free tRNAs and 50S ribosomes. The protein is Peptidyl-tRNA hydrolase of Pseudomonas entomophila (strain L48).